Reading from the N-terminus, the 477-residue chain is uncharacterized protein (477 aa).

Helical transmembrane passes span 31 to 51, 60 to 80, 103 to 123, 130 to 150, 177 to 197, 205 to 225, 248 to 268, 291 to 311, 334 to 354, 359 to 379, 384 to 404, and 433 to 453; these read LLRL…LLGT, LGVP…VAPF, LWFG…SLIL, MGPA…AGVG, LLYV…GWLL, LIRV…IALW, AWGL…VMVG, VGQT…GFIW, IVAF…LFFA, IGLG…MVVV, GIAL…AVFI, and VVYV…GPLV.

Belongs to the PucC family.

The protein localises to the cell membrane. This is an uncharacterized protein from Rhodobacter capsulatus (Rhodopseudomonas capsulata).